Here is a 746-residue protein sequence, read N- to C-terminus: Quiannulatene synthase (746 aa).

Residues 1–336 form a sesterterpenoid synthase region; it reads MASEVIVISD…SRYPTKTELN (336 aa). Mg(2+) is bound at residue D95. The tract at residues 338–746 is geranylfarnesyl diphosphate synthase; sequence PEVIIVDGEL…VELMLRRLWV (409 aa). 3 residues coordinate isopentenyl diphosphate: K465, R468, and H497. Mg(2+) is bound by residues D504 and D508. R513 is a dimethylallyl diphosphate binding site. R514 lines the isopentenyl diphosphate pocket. 5 residues coordinate dimethylallyl diphosphate: K591, T592, Q628, N635, and K645.

In the N-terminal section; belongs to the terpene synthase family. This sequence in the C-terminal section; belongs to the FPP/GGPP synthase family. Mg(2+) is required as a cofactor.

It carries out the reaction isopentenyl diphosphate + (2E,6E)-farnesyl diphosphate = (2E,6E,10E)-geranylgeranyl diphosphate + diphosphate. It catalyses the reaction (2E,6E,10E,14E)-geranylfarnesyl diphosphate = quiannulatene + diphosphate. It participates in secondary metabolite biosynthesis; terpenoid biosynthesis. In terms of biological role, bifunctional sesterterpene synthase; part of the gene cluster that mediates the biosynthesis of the pentacyclic sesterterpene quiannulatic acid. The first step of the pathway is performed by the sesterterpene synthase (QS) that possesses both prenyl transferase and terpene cyclase activity, converting isopentenyl diphosphate and dimethylallyl diphosphate into geranylfarnesyl diphosphate (GFPP) and further converting GFPP into quiannulatene via an unprecedented cyclization mode which involves three rounds of hydride shifts and two successive C-C bond migrations to construct the 5-6-5-5-5 fused ring. The cytochrome P450 monooxygenase Qnn-P450 then oxidizes quiannulatene at C-19 in 3 successive reactions to afford quiannulatic acid. The chain is Quiannulatene synthase from Emericella variicolor (Aspergillus stellatus).